The chain runs to 176 residues: Isopentenyl-diphosphate Delta-isomerase (176 aa).

His-22 and His-28 together coordinate Mn(2+). A Nudix hydrolase domain is found at 26–160 (LRHKAISVFI…PETFTPWLHI (135 aa)). Cys-62 is an active-site residue. His-64 provides a ligand contact to Mn(2+). Glu-82 lines the Mg(2+) pocket. 2 residues coordinate Mn(2+): Glu-108 and Glu-110. Glu-110 is an active-site residue.

This sequence belongs to the IPP isomerase type 1 family. It depends on Mg(2+) as a cofactor. Requires Mn(2+) as cofactor.

The protein localises to the cytoplasm. It catalyses the reaction isopentenyl diphosphate = dimethylallyl diphosphate. The protein operates within isoprenoid biosynthesis; dimethylallyl diphosphate biosynthesis; dimethylallyl diphosphate from isopentenyl diphosphate: step 1/1. It participates in porphyrin-containing compound metabolism; chlorophyll biosynthesis. In terms of biological role, catalyzes the 1,3-allylic rearrangement of the homoallylic substrate isopentenyl (IPP) to its highly electrophilic allylic isomer, dimethylallyl diphosphate (DMAPP). The sequence is that of Isopentenyl-diphosphate Delta-isomerase from Jannaschia sp. (strain CCS1).